The sequence spans 154 residues: Ribosome maturation factor RimP (154 aa).

The protein belongs to the RimP family.

The protein resides in the cytoplasm. Its function is as follows. Required for maturation of 30S ribosomal subunits. This Clostridium perfringens (strain SM101 / Type A) protein is Ribosome maturation factor RimP.